The chain runs to 479 residues: Ribulose bisphosphate carboxylase large chain (479 aa).

A propeptide spanning residues 1 to 2 (MS) is cleaved from the precursor. Residues Asn123 and Thr173 each coordinate substrate. Residue Lys175 is the Proton acceptor of the active site. Residue Lys177 participates in substrate binding. Mg(2+) contacts are provided by Lys201, Asp203, and Glu204. At Lys201 the chain carries N6-carboxylysine. The residue at position 208 (Ser208) is a Phosphoserine. Residue His294 is the Proton acceptor of the active site. Substrate-binding residues include Arg295 and His327. At Thr330 the chain carries Phosphothreonine. Ser379 lines the substrate pocket.

This sequence belongs to the RuBisCO large chain family. Type I subfamily. As to quaternary structure, heterohexadecamer of 8 large chains and 8 small chains; disulfide-linked. The disulfide link is formed within the large subunit homodimers. It depends on Mg(2+) as a cofactor. The disulfide bond which can form in the large chain dimeric partners within the hexadecamer appears to be associated with oxidative stress and protein turnover.

It localises to the plastid. The protein localises to the chloroplast. It catalyses the reaction 2 (2R)-3-phosphoglycerate + 2 H(+) = D-ribulose 1,5-bisphosphate + CO2 + H2O. It carries out the reaction D-ribulose 1,5-bisphosphate + O2 = 2-phosphoglycolate + (2R)-3-phosphoglycerate + 2 H(+). RuBisCO catalyzes two reactions: the carboxylation of D-ribulose 1,5-bisphosphate, the primary event in carbon dioxide fixation, as well as the oxidative fragmentation of the pentose substrate in the photorespiration process. Both reactions occur simultaneously and in competition at the same active site. The polypeptide is Ribulose bisphosphate carboxylase large chain (Olimarabidopsis pumila (Dwarf rocket)).